The sequence spans 560 residues: CTP synthase (560 aa).

The interval 1–272 (MSIGDVCSAR…DTQILSHFGM (272 aa)) is amidoligase domain. Ser20 serves as a coordination point for CTP. Ser20 is a UTP binding site. Residues 21–26 (SLGKGL) and Asp78 each bind ATP. Asp78 and Glu146 together coordinate Mg(2+). CTP contacts are provided by residues 153-155 (DIE), 193-198 (KTKPTQ), and Lys229. Residues 193–198 (KTKPTQ) and Lys229 each bind UTP. A Glutamine amidotransferase type-1 domain is found at 297–539 (TIAIIGKYTK…VQNVLQIKQR (243 aa)). Position 356 (Gly356) interacts with L-glutamine. Cys383 (nucleophile; for glutamine hydrolysis) is an active-site residue. L-glutamine is bound by residues 384–387 (MGMQ), Glu407, and Arg467. Active-site residues include His512 and Glu514.

This sequence belongs to the CTP synthase family. In terms of assembly, homotetramer.

It carries out the reaction UTP + L-glutamine + ATP + H2O = CTP + L-glutamate + ADP + phosphate + 2 H(+). The catalysed reaction is L-glutamine + H2O = L-glutamate + NH4(+). The enzyme catalyses UTP + NH4(+) + ATP = CTP + ADP + phosphate + 2 H(+). It participates in pyrimidine metabolism; CTP biosynthesis via de novo pathway; CTP from UDP: step 2/2. With respect to regulation, allosterically activated by GTP, when glutamine is the substrate; GTP has no effect on the reaction when ammonia is the substrate. The allosteric effector GTP functions by stabilizing the protein conformation that binds the tetrahedral intermediate(s) formed during glutamine hydrolysis. Inhibited by the product CTP, via allosteric rather than competitive inhibition. Functionally, catalyzes the ATP-dependent amination of UTP to CTP with either L-glutamine or ammonia as the source of nitrogen. Regulates intracellular CTP levels through interactions with the four ribonucleotide triphosphates. The polypeptide is CTP synthase (Anaplasma marginale (strain Florida)).